Consider the following 299-residue polypeptide: Cathepsin B-like CP3 (299 aa).

Positions 1-19 (MKLFLLAAAAFSAPALTVS) are cleaved as a signal peptide. Cystine bridges form between C87–C114, C97–C140, and C133–C176. Residue C100 is part of the active site. Residues H244 and N265 contribute to the active site.

It belongs to the peptidase C1 family.

The protein resides in the vacuole. Its function is as follows. Thiol protease which is required for parasite excystation and invasion of the proximal small intestine of the human host. The sequence is that of Cathepsin B-like CP3 (CP3) from Giardia intestinalis (Giardia lamblia).